The following is a 203-amino-acid chain: Endo-type membrane-bound lytic murein transglycosylase A (203 aa).

A signal peptide spans Met1–Gly15. The N-palmitoyl cysteine moiety is linked to residue Cys16. Cys16 carries the S-diacylglycerol cysteine lipid modification.

The protein belongs to the transglycosylase Slt family.

Its subcellular location is the cell outer membrane. The enzyme catalyses Endolytic cleavage of the (1-&gt;4)-beta-glycosidic linkage between N-acetylmuramic acid (MurNAc) and N-acetylglucosamine (GlcNAc) residues in peptidoglycan with concomitant formation of a 1,6-anhydrobond in the MurNAc residue.. Functionally, murein-degrading enzyme. May play a role in recycling of muropeptides during cell elongation and/or cell division. Preferentially cleaves at a distance of more than two disaccharide units from the ends of the glycan chain. The sequence is that of Endo-type membrane-bound lytic murein transglycosylase A from Salmonella paratyphi C (strain RKS4594).